The sequence spans 596 residues: Elongation factor 4 (596 aa).

The tr-type G domain maps to 2-184 (KHIRNFSIIA…TIVAQIPSPE (183 aa)). GTP-binding positions include 14–19 (DHGKST) and 131–134 (NKID).

It belongs to the TRAFAC class translation factor GTPase superfamily. Classic translation factor GTPase family. LepA subfamily.

The protein localises to the cell inner membrane. The enzyme catalyses GTP + H2O = GDP + phosphate + H(+). Its function is as follows. Required for accurate and efficient protein synthesis under certain stress conditions. May act as a fidelity factor of the translation reaction, by catalyzing a one-codon backward translocation of tRNAs on improperly translocated ribosomes. Back-translocation proceeds from a post-translocation (POST) complex to a pre-translocation (PRE) complex, thus giving elongation factor G a second chance to translocate the tRNAs correctly. Binds to ribosomes in a GTP-dependent manner. The sequence is that of Elongation factor 4 from Shewanella amazonensis (strain ATCC BAA-1098 / SB2B).